The following is a 458-amino-acid chain: Tetracycline resistance protein (458 aa).

12 helical membrane-spanning segments follow: residues 12-33, 81-100, 111-129, 140-162, 165-185, 201-221, 223-240, 256-276, 297-317, 324-344, 346-365, and 432-451; these read HNQV…EMVL, LLLF…FVGH, FIQG…VVVA, AFGL…GGMV, YIHW…VPFL, MAGI…TTSY, FSFL…VQHI, VFFV…AGFV, GIIF…GLLV, YVLT…AFFI, AAPW…LSFT, and MLIL…LNVY.

This sequence belongs to the major facilitator superfamily. TCR/Tet family.

It localises to the cell membrane. Resistance to tetracycline by an active tetracycline efflux. This is an energy-dependent process that decreases the accumulation of the antibiotic in whole cells. This protein functions as a metal-tetracycline/H(+) antiporter. This Bacillus subtilis (strain 168) protein is Tetracycline resistance protein (tetB).